A 295-amino-acid chain; its full sequence is Tyrosine recombinase XerC (295 aa).

The 85-residue stretch at 1-85 folds into the Core-binding (CB) domain; that stretch reads MLTALNRYWD…ALRRFLSFLV (85 aa). One can recognise a Tyr recombinase domain in the interval 106 to 285; that stretch reads HLPKNMDGEQ…NFQHLAEVYD (180 aa). Residues arginine 145, lysine 169, histidine 237, arginine 240, and histidine 263 contribute to the active site. The active-site O-(3'-phospho-DNA)-tyrosine intermediate is the tyrosine 272.

This sequence belongs to the 'phage' integrase family. XerC subfamily. Forms a cyclic heterotetrameric complex composed of two molecules of XerC and two molecules of XerD.

It localises to the cytoplasm. In terms of biological role, site-specific tyrosine recombinase, which acts by catalyzing the cutting and rejoining of the recombining DNA molecules. The XerC-XerD complex is essential to convert dimers of the bacterial chromosome into monomers to permit their segregation at cell division. It also contributes to the segregational stability of plasmids. The chain is Tyrosine recombinase XerC from Haemophilus influenzae (strain 86-028NP).